Consider the following 189-residue polypeptide: ATP synthase subunit b 1 (189 aa).

Residues T32–L52 traverse the membrane as a helical segment.

It belongs to the ATPase B chain family. F-type ATPases have 2 components, F(1) - the catalytic core - and F(0) - the membrane proton channel. F(1) has five subunits: alpha(3), beta(3), gamma(1), delta(1), epsilon(1). F(0) has three main subunits: a(1), b(2) and c(10-14). The alpha and beta chains form an alternating ring which encloses part of the gamma chain. F(1) is attached to F(0) by a central stalk formed by the gamma and epsilon chains, while a peripheral stalk is formed by the delta and b chains.

It localises to the cell inner membrane. In terms of biological role, f(1)F(0) ATP synthase produces ATP from ADP in the presence of a proton or sodium gradient. F-type ATPases consist of two structural domains, F(1) containing the extramembraneous catalytic core and F(0) containing the membrane proton channel, linked together by a central stalk and a peripheral stalk. During catalysis, ATP synthesis in the catalytic domain of F(1) is coupled via a rotary mechanism of the central stalk subunits to proton translocation. Its function is as follows. Component of the F(0) channel, it forms part of the peripheral stalk, linking F(1) to F(0). The chain is ATP synthase subunit b 1 from Maricaulis maris (strain MCS10) (Caulobacter maris).